The sequence spans 63 residues: Large ribosomal subunit protein uL29 (63 aa).

It belongs to the universal ribosomal protein uL29 family.

The protein is Large ribosomal subunit protein uL29 of Pelagibacter ubique (strain HTCC1062).